A 974-amino-acid polypeptide reads, in one-letter code: Phosphoenolpyruvate carboxylase 1 (974 aa).

Catalysis depends on residues His164 and Lys604.

Belongs to the PEPCase type 1 family. Exists as a homotetramer or heterooligomer. Mg(2+) is required as a cofactor.

The protein resides in the cytoplasm. The catalysed reaction is oxaloacetate + phosphate = phosphoenolpyruvate + hydrogencarbonate. Its activity is regulated as follows. Activated by glutamine and dihydroxyacetone phosphate. Inhibited by glutamate, aspartate, 2-oxoglutarate and malate. Its function is as follows. Through the carboxylation of phosphoenolpyruvate (PEP) it forms oxaloacetate, a four-carbon dicarboxylic acid source for the tricarboxylic acid cycle. The chain is Phosphoenolpyruvate carboxylase 1 from Chlamydomonas reinhardtii (Chlamydomonas smithii).